A 398-amino-acid polypeptide reads, in one-letter code: Carbamoyl phosphate synthase small chain (398 aa).

The interval 1-199 is CPSase; that stretch reads MTPAWATEKP…WNEGFGEQAE (199 aa). L-glutamine contacts are provided by Ser54, Gly251, and Gly253. The Glutamine amidotransferase type-1 domain maps to 203–391; that stretch reads HVVAIDYGVK…VNLIREKRGE (189 aa). Residue Cys280 is the Nucleophile of the active site. L-glutamine contacts are provided by Leu281, Gln284, Asn322, Gly324, and Phe325. Residues His364 and Glu366 contribute to the active site.

Belongs to the CarA family. As to quaternary structure, composed of two chains; the small (or glutamine) chain promotes the hydrolysis of glutamine to ammonia, which is used by the large (or ammonia) chain to synthesize carbamoyl phosphate. Tetramer of heterodimers (alpha,beta)4.

The enzyme catalyses hydrogencarbonate + L-glutamine + 2 ATP + H2O = carbamoyl phosphate + L-glutamate + 2 ADP + phosphate + 2 H(+). The catalysed reaction is L-glutamine + H2O = L-glutamate + NH4(+). The protein operates within amino-acid biosynthesis; L-arginine biosynthesis; carbamoyl phosphate from bicarbonate: step 1/1. It functions in the pathway pyrimidine metabolism; UMP biosynthesis via de novo pathway; (S)-dihydroorotate from bicarbonate: step 1/3. In terms of biological role, small subunit of the glutamine-dependent carbamoyl phosphate synthetase (CPSase). CPSase catalyzes the formation of carbamoyl phosphate from the ammonia moiety of glutamine, carbonate, and phosphate donated by ATP, constituting the first step of 2 biosynthetic pathways, one leading to arginine and/or urea and the other to pyrimidine nucleotides. The small subunit (glutamine amidotransferase) binds and cleaves glutamine to supply the large subunit with the substrate ammonia. The chain is Carbamoyl phosphate synthase small chain from Mesorhizobium japonicum (strain LMG 29417 / CECT 9101 / MAFF 303099) (Mesorhizobium loti (strain MAFF 303099)).